The following is a 158-amino-acid chain: Cyclic pyranopterin monophosphate synthase (158 aa).

Substrate contacts are provided by residues 74–76 (MCH) and 112–113 (ME). Asp-127 is an active-site residue.

Belongs to the MoaC family. Homohexamer; trimer of dimers.

The enzyme catalyses (8S)-3',8-cyclo-7,8-dihydroguanosine 5'-triphosphate = cyclic pyranopterin phosphate + diphosphate. It participates in cofactor biosynthesis; molybdopterin biosynthesis. In terms of biological role, catalyzes the conversion of (8S)-3',8-cyclo-7,8-dihydroguanosine 5'-triphosphate to cyclic pyranopterin monophosphate (cPMP). This Helicobacter pylori (strain ATCC 700392 / 26695) (Campylobacter pylori) protein is Cyclic pyranopterin monophosphate synthase.